Consider the following 337-residue polypeptide: Protein-glutamate methylesterase/protein-glutamine glutaminase of group 3 operon (337 aa).

In terms of domain architecture, Response regulatory spans 2–119; the sequence is KIAIVNDMPL…GDAREAAAPL (118 aa). Position 53 is a 4-aspartylphosphate (aspartate 53). Positions 144-337 constitute a CheB-type methylesterase domain; that stretch reads PLREASQRRG…AGRLTEFFAK (194 aa). Residues serine 160, histidine 187, and aspartate 280 contribute to the active site.

This sequence belongs to the CheB family. Post-translationally, phosphorylated by CheA. Phosphorylation of the N-terminal regulatory domain activates the methylesterase activity.

It is found in the cytoplasm. It carries out the reaction [protein]-L-glutamate 5-O-methyl ester + H2O = L-glutamyl-[protein] + methanol + H(+). The enzyme catalyses L-glutaminyl-[protein] + H2O = L-glutamyl-[protein] + NH4(+). Functionally, involved in chemotaxis. Part of a chemotaxis signal transduction system that modulates chemotaxis in response to various stimuli. Catalyzes the demethylation of specific methylglutamate residues introduced into the chemoreceptors (methyl-accepting chemotaxis proteins or MCP) by CheR. Also mediates the irreversible deamidation of specific glutamine residues to glutamic acid. In Pseudomonas putida (strain ATCC 47054 / DSM 6125 / CFBP 8728 / NCIMB 11950 / KT2440), this protein is Protein-glutamate methylesterase/protein-glutamine glutaminase of group 3 operon.